The sequence spans 399 residues: Protein shisa-8 (399 aa).

Residues 1-36 (MERAGARGQRCGRRSHGLPLALRLALLLAGSPSGRA) form the signal peptide. Topologically, residues 37–136 (GAPEEQEIAG…APRDPARERS (100 aa)) are extracellular. Asn-73 carries an N-linked (GlcNAc...) asparagine glycan. Residues 137-157 (HTAVYAVCGVAALLVLVGIGA) traverse the membrane as a helical segment. Over 158–399 (RLGLERAHSP…STNSKAEVTV (242 aa)) the chain is Cytoplasmic. Disordered stretches follow at residues 207–248 (GDGV…GGSL) and 378–399 (FYSSAGRGPRHLSTNSKAEVTV). Positions 389 to 399 (LSTNSKAEVTV) are enriched in polar residues.

This sequence belongs to the shisa family. As to quaternary structure, interacts with AMPAR subunits GRIA1 and GRIA2. As to expression, brain-specific. Highly expressed in cerebellum and olfactory bulb.

It is found in the membrane. May regulate trafficking and current kinetics of AMPA-type glutamate receptor (AMPAR) at synapses. This is Protein shisa-8 from Mus musculus (Mouse).